A 2150-amino-acid polypeptide reads, in one-letter code: Hybrid signal transduction histidine kinase A (2150 aa).

Basic and acidic residues predominate over residues 1–10; it reads MELKTFKDLN. 8 disordered regions span residues 1 to 41, 68 to 149, 184 to 267, 286 to 323, 339 to 359, 415 to 505, 520 to 546, and 560 to 733; these read MELK…QQQQ, HIPQ…YYYS, NSSS…HQRR, KNKPLSSSTPSTVNTCGAVNNNSNNNNNNNNNSTGSLG, TEESTGGNNSPRSNCGSNCGS, NNNN…NSPR, SLTSSNNNNQSNNNTNPSINNNNGRNG, and KPVV…NGAT. A compositionally biased stretch (polar residues) spans 19-32; the sequence is PVINTGDQPNPLRT. The span at 68–81 shows a compositional bias: low complexity; the sequence is HIPQQLYQKQQQQQ. Residues 82-104 show a composition bias toward polar residues; sequence HSHSYGNHSFIHNVSPTSPSYDI. Low complexity-rich tracts occupy residues 105–145 and 184–244; these read NNNN…YNNN and NSSS…NNNI. Polar residues predominate over residues 289 to 304; the sequence is PLSSSTPSTVNTCGAV. Low complexity-rich tracts occupy residues 305 to 318, 344 to 359, and 415 to 447; these read NNNSNNNNNNNNNS, GGNNSPRSNCGSNCGS, and NNNNNNINPNNNPNNSNNSNNNVSPRNNNHNIS. Polar residues predominate over residues 448–468; the sequence is PRGSNISPRSNNGGSTTISPR. Composition is skewed to low complexity over residues 469-485, 520-545, and 565-600; these read NISNNNNIINNINNNNI, SLTSSNNNNQSNNNTNPSINNNNGRN, and NNGNNNNNNNTNNSTTSNNNITTNNNNNNNNNINNN. Residues 614 to 628 are compositionally biased toward polar residues; it reads SKTNSLQDFETSSMN. The segment covering 657–727 has biased composition (low complexity); it reads NSNNTNSNNS…NNNNNNNNNN (71 aa). A helical membrane pass occupies residues 772–792; it reads AIILGLFIVGSSISILATLVL. The region spanning 838-1082 is the CHASE domain; the sequence is STSEDQFVPF…NVGGRNWMIA (245 aa). The chain crosses the membrane as a helical span at residues 1098-1118; that stretch reads PYAIGGVCMLLSALVSFWFAV. Positions 1139-1164 form a coiled coil; it reads NRKLAEKALAESQERLELAMEGSEDA. Disordered regions lie at residues 1209–1228 and 1233–1252; these read LNFKGDSKNGGSNNGTFNLF and VDSSSPQSITNVNTTNGGGG. Positions 1235–1317 constitute a PAS domain; that stretch reads SSSPQSITNV…SEIKKTITRE (83 aa). The region spanning 1321–1376 is the PAC domain; it reads MEIECRMRKKYGGYLYIIMRGKVVSNETSFKDNSLRMAGTLRDMTSRKDMQRLILE. The Histidine kinase domain occupies 1393-1620; it reads TVSHEVRTPL…KFKCIIPFLL (228 aa). His1396 is subject to Phosphohistidine; by autocatalysis. Disordered stretches follow at residues 1874–1893, 1933–1952, and 1962–2017; these read GGGSNTMNGSSGNLSNNNNF, HGNQQQQLYQQQQQQQNNSS, and QNNN…DTPV. 3 stretches are compositionally biased toward low complexity: residues 1878–1893, 1935–1952, and 1962–2002; these read NTMNGSSGNLSNNNNF, NQQQQLYQQQQQQQNNSS, and QNNN…TPTL. A Response regulatory domain is found at 2026–2146; that stretch reads KALIVEDNEL…TLKDALAKWG (121 aa). A 4-aspartylphosphate modification is found at Asp2076.

In terms of assembly, interacts with SDF-2, an acbA peptide involved in sporulation.

The protein localises to the cell membrane. It carries out the reaction ATP + protein L-histidine = ADP + protein N-phospho-L-histidine.. Its function is as follows. Acts as a receptor histidine kinase for the cytokinin SDF-2 in a signal transduction pathway that regulates prestalk gene expression and controls terminal differentiation of prespore cells. Binding of SDF-2 to this protein inhibits phosphorelay and induces rapid sporulation. This protein undergoes an ATP-dependent autophosphorylation at a conserved histidine residue in the kinase core, and a phosphoryl group is then transferred to a conserved aspartate residue in the receiver domain. The chain is Hybrid signal transduction histidine kinase A (dhkA) from Dictyostelium discoideum (Social amoeba).